The sequence spans 563 residues: Zinc finger CCHC domain-containing protein 7 (563 aa).

Disordered stretches follow at residues Ser41–Ala64 and Ser133–Ser157. The segment covering Ser133–Pro142 has biased composition (polar residues). Positions Gln143–Ser157 are enriched in low complexity. 5 consecutive CCHC-type zinc fingers follow at residues Val265–Val282, Pro287–Ser304, Arg305–Glu322, Lys328–Glu345, and Val372–Glu389. The disordered stretch occupies residues Lys443–Asp494. Residues Pro449–Arg463 are compositionally biased toward basic residues. A compositionally biased stretch (basic and acidic residues) spans Lys464–Lys476. Residues Gln477–Ser486 show a composition bias toward basic residues.

Component of a nucleolar TRAMP-like complex, an ATP-dependent exosome regulatory complex consisting of a helicase (MTREX), an oligadenylate polymerase (PAPD5 or PAPD7), and a substrate specific RNA-binding factor (ZCCHC7 or ZCCHC8). Several TRAMP-like complexes exist with specific compositions and are associated with nuclear, or nucleolar RNA exosomes.

It localises to the nucleus. Its subcellular location is the nucleolus. This chain is Zinc finger CCHC domain-containing protein 7 (zcchc7), found in Xenopus laevis (African clawed frog).